Consider the following 482-residue polypeptide: tRNA sulfurtransferase (482 aa).

The THUMP domain occupies 61 to 165 (LAIRDALTRI…DDRLLLIKGR (105 aa)). Residues 183–184 (LI), Lys265, Gly287, and Gln296 each bind ATP. Cys344 and Cys456 form a disulfide bridge. The 79-residue stretch at 404-482 (FGPNDVILDI…GFNNVKVYRL (79 aa)) folds into the Rhodanese domain. Cys456 functions as the Cysteine persulfide intermediate in the catalytic mechanism.

It belongs to the ThiI family.

The protein localises to the cytoplasm. The enzyme catalyses [ThiI sulfur-carrier protein]-S-sulfanyl-L-cysteine + a uridine in tRNA + 2 reduced [2Fe-2S]-[ferredoxin] + ATP + H(+) = [ThiI sulfur-carrier protein]-L-cysteine + a 4-thiouridine in tRNA + 2 oxidized [2Fe-2S]-[ferredoxin] + AMP + diphosphate. It catalyses the reaction [ThiS sulfur-carrier protein]-C-terminal Gly-Gly-AMP + S-sulfanyl-L-cysteinyl-[cysteine desulfurase] + AH2 = [ThiS sulfur-carrier protein]-C-terminal-Gly-aminoethanethioate + L-cysteinyl-[cysteine desulfurase] + A + AMP + 2 H(+). It functions in the pathway cofactor biosynthesis; thiamine diphosphate biosynthesis. Functionally, catalyzes the ATP-dependent transfer of a sulfur to tRNA to produce 4-thiouridine in position 8 of tRNAs, which functions as a near-UV photosensor. Also catalyzes the transfer of sulfur to the sulfur carrier protein ThiS, forming ThiS-thiocarboxylate. This is a step in the synthesis of thiazole, in the thiamine biosynthesis pathway. The sulfur is donated as persulfide by IscS. The chain is tRNA sulfurtransferase from Shigella boydii serotype 18 (strain CDC 3083-94 / BS512).